Reading from the N-terminus, the 77-residue chain is uncharacterized protein (77 aa).

It is found in the plastid. It localises to the cyanelle. This is an uncharacterized protein from Cyanophora paradoxa.